The chain runs to 864 residues: Mitochondrial 15S rRNA processing factor CCM1 (864 aa).

The N-terminal 76 residues, 1–76 (MYMARCGPKN…REFSNTLKER (76 aa)), are a transit peptide targeting the mitochondrion. PPR repeat units lie at residues 319-353 (NKQNLTTVIQFYSRKEMTKQAWNTFDTMKFLSTKH) and 356-390 (DICTYNTMLRICEKERNFPKALDLFQEIQDHNIKP).

Belongs to the CCM1 family. In terms of assembly, binds to mitochondrial small subunit 15S rRNA.

The protein localises to the mitochondrion. Regulates mitochondrial small subunit maturation by controlling 15S rRNA 5'-end processing. Localizes to the 5' precursor of the 15S rRNA in a position that is subsequently occupied by mS47 in the mature yeast mtSSU. Uses structure and sequence-specific RNA recognition, binding to a single-stranded region of the precursor and specifically recognizing bases -6 to -1. The exchange of Ccm1 for mS47 is coupled to the irreversible removal of precursor rRNA that is accompanied by conformational changes of the mitoribosomal proteins uS5m and mS26. These conformational changes signal completion of 5'-end rRNA processing through protection of the mature 5'-end of the 15S rRNA and stabilization of mS47. The removal of the 5' precursor together with the dissociation of Ccm1 may be catalyzed by the 5'-3' exoribonuclease Pet127. Involved in the specific removal of group I introns in mitochondrial encoded transcripts. This is Mitochondrial 15S rRNA processing factor CCM1 (CCM1) from Saccharomyces cerevisiae (strain YJM789) (Baker's yeast).